Reading from the N-terminus, the 330-residue chain is Zinc finger protein Gfi-1b (330 aa).

An SNAG domain region spans residues 1–20 (MPRSFLVKSKKAHTYHQPRV). Positions 1-42 (MPRSFLVKSKKAHTYHQPRVQEDEPLWPPALTPVPRDQAPSN) are disordered. Lys-8 carries the post-translational modification N6,N6-dimethyllysine. Residues 91 to 330 (GDSPLSDSPP…RHRESQHNLK (240 aa)) form an interaction with ARIH2 region. 6 C2H2-type zinc fingers span residues 163 to 186 (YHCV…RRSH), 192 to 214 (FACD…THVH), 220 to 242 (FECR…LLIH), 248 to 270 (YPCQ…TYIH), 276 to 298 (HKCQ…SRKH), and 304 to 327 (FSCE…ESQH). Residues 164-330 (HCVKCNKVFS…RHRESQHNLK (167 aa)) are mediates interaction with GATA1.

In terms of assembly, component of a RCOR-GFI-KDM1A-HDAC complex. Interacts directly with RCOR1, KDM1A and HDAC2. Forms a complex with GATA1. Interacts with histone methyltransferases EHMT2 and SUV39H1. Interacts with ARIH2 (via RING-type 2). Interacts with RUNX1T1. Methylation at Lys-8 in the SNAG domain seems required for the recruitment of the corepressor complex. Expressed in bone marrow and fetal liver, but also detectable in fetal spleen, fetal thymus, and testes. Detected in hematopoietic stem cells, erythroblasts, and megakaryocytes. Overexpressed in bone marrow of patients with erythroleukemia and megakaryocytic leukemia as well as in their corresponding leukemic cell lines, and markedly repressed in severe aplastic anemia (SAA).

It is found in the nucleus. Functionally, essential proto-oncogenic transcriptional regulator necessary for development and differentiation of erythroid and megakaryocytic lineages. Component of a RCOR-GFI-KDM1A-HDAC complex that suppresses, via histone deacetylase (HDAC) recruitment, a number of genes implicated in multilineage blood cell development and controls hematopoietic differentiation. Transcriptional repressor or activator depending on both promoter and cell type context; represses promoter activity of SOCS1 and SOCS3 and thus, may regulate cytokine signaling pathways. Cooperates with GATA1 to repress target gene transcription, such as the apoptosis regulator BCL2L1; GFI1B silencing in leukemic cell lines markedly increase apoptosis rate. Inhibits down-regulation of MYC and MYB as well as the cyclin-dependent kinase inhibitor CDKN1A/P21WAF1 in IL6-treated myelomonocytic cells. Represses expression of GATA3 in T-cell lymphomas and inhibits GATA1-mediated transcription; as GATA1 also mediates erythroid GFI1B transcription, both GATA1 and GFI1B participate in a feedback regulatory pathway controlling the expression of GFI1B gene in erythroid cells. Suppresses GATA1-mediated stimulation of GFI1B promoter through protein interaction. Binds to gamma-satellite DNA and to its own promoter, auto-repressing its own expression. Alters histone methylation by recruiting histone methyltransferase to target genes promoters. Plays a role in heterochromatin formation. The sequence is that of Zinc finger protein Gfi-1b (GFI1B) from Homo sapiens (Human).